The primary structure comprises 1641 residues: Alpha-2-macroglobulin (1641 aa).

A signal peptide spans 1 to 31 (MRDRVAMMLRPLVRGWIPRAVLLLTVAFSFG). Residue Cys-32 is the site of N-palmitoyl cysteine attachment. A lipid anchor (S-diacylglycerol cysteine) is attached at Cys-32. The isoglutamyl cysteine thioester (Cys-Gln) cross-link spans 1166-1169 (CAEQ).

It belongs to the protease inhibitor I39 (alpha-2-macroglobulin) family. Bacterial alpha-2-macroglobulin subfamily.

It is found in the cell membrane. In terms of biological role, protects the bacterial cell from host peptidases. The sequence is that of Alpha-2-macroglobulin from Xylella fastidiosa (strain Temecula1 / ATCC 700964).